A 913-amino-acid chain; its full sequence is Probable TonB-dependent receptor HI_1217 (913 aa).

An N-terminal signal peptide occupies residues 1-27 (MKKAIKLNLITLGLINTIGMTITQAQA). The TBDR plug domain maps to 42–165 (SNDKKPFTEA…LAGSANFRTL (124 aa)). In terms of domain architecture, TBDR beta-barrel spans 176–913 (PFGIILKGMT…TYILSLNYKF (738 aa)). The TonB C-terminal box signature appears at 896–913 (LYNFARGRTYILSLNYKF).

Belongs to the TonB-dependent receptor family.

It localises to the cell outer membrane. In terms of biological role, probable receptor, TonB-dependent. This is Probable TonB-dependent receptor HI_1217 from Haemophilus influenzae (strain ATCC 51907 / DSM 11121 / KW20 / Rd).